The following is a 139-amino-acid chain: Protein AC53 (139 aa).

The protein localises to the host cytoplasm. The protein resides in the host nucleus. Plays a role in nucleocapsid assembly. The polypeptide is Protein AC53 (AC53) (Lepidoptera (butterflies and moths)).